A 173-amino-acid polypeptide reads, in one-letter code: Placenta-specific protein 1 (173 aa).

The N-terminal stretch at 1–23 (MKLIKFLGGVVFFTLMFSGYSEQ) is a signal peptide.

Belongs to the PLAC1 family.

It is found in the secreted. Functionally, may play a role in placental development. This is Placenta-specific protein 1 from Rattus norvegicus (Rat).